The primary structure comprises 1030 residues: ADAMTS-like protein 4 (1030 aa).

Positions 1-24 are cleaved as a signal peptide; the sequence is MELWLGRLWLYVMLLLLLLQLCQD. Residues 47-91 enclose the TSP type-1 1 domain; it reads GPWGRWASCSQPCGVGVQRRSRTCELHPALSLPPRPPRHPEAPQP. 2 disordered regions span residues 73 to 150 and 168 to 306; these read HPAL…KPGM and LAHK…LPLT. Polar residues-rich tracts occupy residues 176–186, 211–237, and 245–257; these read KDSSTAEETLP, QSRS…SSAP, and PTSS…SFQG. Asn451 and Asn731 each carry an N-linked (GlcNAc...) asparagine glycan. 5 consecutive TSP type-1 domains span residues 681 to 740, 741 to 800, 803 to 865, 866 to 925, and 926 to 982; these read CPPY…QLRL, CGHW…GPCT, WFYS…GPCE, KTWR…QGQA, and CEDQ…QPCN. Residues 985 to 1022 enclose the PLAC domain; sequence PDDQCKDSSPHCPLVVQARLCVYPYYTATCCRSCAHVL.

In terms of assembly, interacts with CTSB. Interacts with FBN1. Glycosylated. Can be O-fucosylated by POFUT2 on a serine or a threonine residue found within the consensus sequence C1-X(2)-(S/T)-C2-G of the TSP type-1 repeat domains where C1 and C2 are the first and second cysteine residue of the repeat, respectively. Fucosylated repeats can then be further glycosylated by the addition of a beta-1,3-glucose residue by the glucosyltransferase, B3GALTL. Fucosylation mediates the efficient secretion of ADAMTS family members. Can also be C-glycosylated with one or two mannose molecules on tryptophan residues within the consensus sequence W-X-X-W of the TPRs, and N-glycosylated. These other glycosylations can also facilitate secretion.

It is found in the secreted. Its subcellular location is the extracellular space. It localises to the extracellular matrix. Functionally, positive regulation of apoptosis. May facilitate FBN1 microfibril biogenesis. The protein is ADAMTS-like protein 4 of Rattus norvegicus (Rat).